A 152-amino-acid chain; its full sequence is UPF0178 protein CKL_3490 (152 aa).

Belongs to the UPF0178 family.

The chain is UPF0178 protein CKL_3490 from Clostridium kluyveri (strain ATCC 8527 / DSM 555 / NBRC 12016 / NCIMB 10680 / K1).